The chain runs to 118 residues: uncharacterized protein (118 aa).

2 helical membrane passes run 5-25 and 40-57; these read AFFN…SMVI and FLTF…QHYI.

It is found in the membrane. This is an uncharacterized protein from African swine fever virus (strain Badajoz 1971 Vero-adapted) (Ba71V).